We begin with the raw amino-acid sequence, 944 residues long: Isoleucine--tRNA ligase (944 aa).

The 'HIGH' region signature appears at 58 to 68 (PYANGSIHIGH). E563 contacts L-isoleucyl-5'-AMP. The 'KMSKS' region signature appears at 604 to 608 (KMSKS). Residue K607 coordinates ATP. C907, C910, C927, and C930 together coordinate Zn(2+).

The protein belongs to the class-I aminoacyl-tRNA synthetase family. IleS type 1 subfamily. As to quaternary structure, monomer. It depends on Zn(2+) as a cofactor.

It is found in the cytoplasm. The catalysed reaction is tRNA(Ile) + L-isoleucine + ATP = L-isoleucyl-tRNA(Ile) + AMP + diphosphate. Functionally, catalyzes the attachment of isoleucine to tRNA(Ile). As IleRS can inadvertently accommodate and process structurally similar amino acids such as valine, to avoid such errors it has two additional distinct tRNA(Ile)-dependent editing activities. One activity is designated as 'pretransfer' editing and involves the hydrolysis of activated Val-AMP. The other activity is designated 'posttransfer' editing and involves deacylation of mischarged Val-tRNA(Ile). This Salmonella choleraesuis (strain SC-B67) protein is Isoleucine--tRNA ligase.